The primary structure comprises 1665 residues: Protein scribble homolog (1665 aa).

The segment at 1–804 is sufficient for targeting to adherens junction and to inhibit cell proliferation; that stretch reads MLKCIPLWRC…MRVWRERMVE (804 aa). Ser-37 carries the phosphoserine modification. LRR repeat units follow at residues 37–58, 60–81, 83–104, 106–127, 129–150, 152–174, 175–197, 198–219, 221–243, 244–265, 267–288, 290–312, 313–334, 336–357, 359–381, and 382–402; these read SLEELLLDANQLRELPKPFFRL, NLRKLGLSDNEIQRLPPEVANF, QLVELDVSRNDIPEIPESIKFC, ALEIADFSGNPLSRLPDGFTQL, SLAHLALNDVSLQALPGDVGNL, NLVTLELRENLLKSLPASLSFLV, KLEQLDLGGNDLEVLPDTLGALP, NLRELWLDRNQLSALPPELGNL, RLVCLDVSENRLEELPVELGGLA, LLTDLLLSQNLLQRLPEGIGQL, QLSILKVDQNRLCEVTEAIGDC, NLSELILTENLLTALPHSLGKLT, KLTNLNVDRNHLEVLPPEIGGC, ALSVLSLRDNRLAVLPPELAHT, ELHVLDVAGNRLRSLPFALTHLN, and LKALWLAENQAQPMLRFQTED. Phosphothreonine is present on Thr-378. Disordered regions lie at residues 422 to 615 and 635 to 689; these read PSLE…HFKI and REGP…SAPS. Positions 428–437 are enriched in polar residues; sequence GQQSSPSESC. Residues 452 to 463 show a composition bias toward acidic residues; sequence DTLEGEEDAEEA. Positions 455-475 form a coiled coil; sequence EGEEDAEEAAAEKRGLQRRAT. Position 475 is a phosphothreonine (Thr-475). 2 stretches are compositionally biased toward basic and acidic residues: residues 479 to 494 and 570 to 580; these read SELKVMKRGIEERRNE and FAEDTLIPRED. Phosphoserine is present on Ser-583. Residues 653-687 adopt a coiled-coil conformation; sequence RAHEEEEEEEEENRDEEEGEATTEEDDKEEAVASA. Over residues 657–681 the composition is skewed to acidic residues; sequence EEEEEEEENRDEEEGEATTEEDDKE. Phosphothreonine occurs at positions 674 and 675. Residues Ser-694 and Ser-750 each carry the phosphoserine modification. Residues 703-1215 are interaction with ARHGEF7; the sequence is IEPARIEEEE…SLESISSIDR (513 aa). A PDZ 1 domain is found at 714–801; the sequence is TLTIVRQTGG…AVQMRVWRER (88 aa). Positions 714-1180 are required for interaction with VIM; that stretch reads TLTIVRQTGG…TVLVCDGFDT (467 aa). At Thr-812 the chain carries Phosphothreonine. Residues Ser-821, Ser-861, and Ser-925 each carry the phosphoserine modification. PDZ domains are found at residues 848 to 936, 990 to 1079, and 1086 to 1180; these read AACL…ERET, EICL…RRDP, and ELCI…GFDT. Phosphoserine is present on residues Ser-1126, Ser-1206, Ser-1209, Ser-1212, Ser-1218, Ser-1262, Ser-1265, and Ser-1284. The span at 1213–1228 shows a compositional bias: basic and acidic residues; sequence IDRELSPEGPGKEKEL. Positions 1213-1246 are disordered; sequence IDRELSPEGPGKEKELASQALPWESESAETTGRN. Disordered stretches follow at residues 1263 to 1325 and 1341 to 1501; these read AGSL…DELP and VHPP…AERR. The span at 1264 to 1277 shows a compositional bias: polar residues; it reads GSLQRGPSATTGGK. At Lys-1291 the chain carries Omega-N-methylarginine. Residue Ala-1299 is modified to Phosphoserine. Arg-1312 is modified (omega-N-methylarginine). Position 1320 is a phosphoserine (Ser-1320). Residue Thr-1353 is modified to Phosphothreonine. At Ser-1359 the chain carries Phosphoserine. Residues 1364 to 1376 are compositionally biased toward basic and acidic residues; that stretch reads SFRERQKYFELEV. Position 1389 is a phosphoserine (Ser-1389). Residues 1390 to 1421 are a coiled coil; it reads LVGADDLRKMQEEEARKLQQKRAQMLREEAVT. Positions 1394-1406 are enriched in basic and acidic residues; the sequence is DDLRKMQEEEARK. Phosphoserine occurs at positions 1455 and 1458. Positions 1471–1482 are enriched in basic and acidic residues; it reads AKAERRHQERLR. A phosphoserine mark is found at Ser-1485, Ser-1496, and Ser-1518. The tract at residues 1530–1577 is disordered; the sequence is LSKSQEGRGKRGPLERLAEAPSPAPTPSPTPLEDFGLQTSASPGRLPL. The segment covering 1534–1547 has biased composition (basic and acidic residues); that stretch reads QEGRGKRGPLERLA. Ser-1551 carries the post-translational modification Phosphoserine. Position 1555 is a phosphothreonine (Thr-1555). A phosphoserine mark is found at Ser-1557, Ser-1571, and Ser-1601. Residues 1632-1665 are disordered; it reads GRPSPGAVGPEDMTLCSSRRSVRPGRRGLGPVPS.

Belongs to the LAP (LRR and PDZ) protein family. As to quaternary structure, interacts with UBE3A. Interacts with PAK1 and PAK2. Interacts (via PDZ domains) with VANGL2. Interacts (via PDZ domains) with LPP and TRIP6; the interaction is direct. Interacts (via PDZ domains) with TJP2. Interacts (via PDZ domains) with APC; may mediate APC targeting to adherens junctions of epithelial cells. Interacts (via PDZ domains) with TSHR; regulates TSHR trafficking and function. Interacts with ARHGEF7 and GIT1; interacts directly with ARHGEF7. Interacts with CTNNB1. Interacts with MAPK12. Interacts (via PDZ domains 1 and 3) with MCC. Interacts with DLG5. Interacts with STK4/MST1 and LATS1 in the presence of DLG5. Interacts (via PDZ domain 3) with CRTAM (via PDZ-binding motif); the interaction promotes CRTAM and SCRIB polarization in a subset of CD4+ T-cells. Interacts with YES1, when YES1 is in a closed conformation; the interaction facilitates YES1 autophosphorylation. Interacts (via PDZ domains) with VIM; the interaction protects SCRIB from proteasomal degradation and facilitates SCRIB localization to intermediate filaments, the interaction is reduced by cell contact inhibition. Ubiquitinated; targeted for UBE3A-dependent multiubiquitination and degraded. In terms of processing, palmitoylated. Could be depalmitoylated by LYPLA1 and/or LYPLA2. Palmitoylation of SCRIB by ZDHHC7 is required for its localization to cell-cell junctions, function in the establishement of epithelial cell polarity and the regulation of downstream signaling pathways important for epithelial cell differentiation. As to expression, expressed in CD4+ T-cells (at protein level). Found in a wide range of tissues including liver, kidney and spleen. Also expressed in the brain (at protein level).

The protein resides in the cell membrane. It is found in the cell junction. It localises to the adherens junction. Its subcellular location is the cell projection. The protein localises to the lamellipodium. The protein resides in the cytoplasm. It is found in the postsynapse. It localises to the presynapse. Functionally, scaffold protein involved in different aspects of polarized cell differentiation regulating epithelial and neuronal morphogenesis and T-cell polarization. Via its interaction with CRTAM, required for the late phase polarization of a subset of CD4+ T-cells, which in turn regulates TCR-mediated proliferation and IFNG and IL22 production. Plays a role in cell directional movement, cell orientation, cell sheet organization and Golgi complex polarization at the cell migration front. Promotes epithelial cell layer barrier function via maintaining cell-cell adhesion. Most probably functions in the establishment of apico-basal cell polarity. May function in cell proliferation regulating progression from G1 to S phase and as a positive regulator of apoptosis for instance during acinar morphogenesis of the mammary epithelium. May regulate cell invasion via MAPK-mediated cell migration and adhesion. May play a role in exocytosis and in the targeting of synaptic vesicles to synapses. Functions as an activator of Rac GTPase activity. The protein is Protein scribble homolog of Mus musculus (Mouse).